We begin with the raw amino-acid sequence, 490 residues long: GTPase Der (490 aa).

2 EngA-type G domains span residues 3–166 (PVIA…PRDD) and 196–369 (IKIA…KSAV). GTP contacts are provided by residues 9–16 (GRPNVGKS), 56–60 (DTGGI), and 118–121 (NKVD). A disordered region spans residues 162-189 (FPRDDDEPAEGEEEEVVAEGEEAKRIPG). Residues 164 to 181 (RDDDEPAEGEEEEVVAEG) show a composition bias toward acidic residues. GTP contacts are provided by residues 202 to 209 (GRPNVGKS), 249 to 253 (DTAGV), and 314 to 317 (NKWD). The KH-like domain occupies 370 to 454 (TRWPTSRLTQ…PIRIEFKGGE (85 aa)). Positions 453–490 (GENPYEGNKNTLTDRQVNKKRRLMSHNKKASKKRRDKK) are disordered. Over residues 470-490 (NKKRRLMSHNKKASKKRRDKK) the composition is skewed to basic residues.

It belongs to the TRAFAC class TrmE-Era-EngA-EngB-Septin-like GTPase superfamily. EngA (Der) GTPase family. As to quaternary structure, associates with the 50S ribosomal subunit.

Functionally, GTPase that plays an essential role in the late steps of ribosome biogenesis. This chain is GTPase Der, found in Pseudomonas fluorescens (strain Pf0-1).